The primary structure comprises 317 residues: uncharacterized protein (317 aa).

Low complexity predominate over residues 68–78 (DSTNTDISNET). Residues 68-87 (DSTNTDISNETPILSNNTPI) form a disordered region.

This is an uncharacterized protein from Methanocaldococcus jannaschii (strain ATCC 43067 / DSM 2661 / JAL-1 / JCM 10045 / NBRC 100440) (Methanococcus jannaschii).